We begin with the raw amino-acid sequence, 277 residues long: Protein CIMAP1D (277 aa).

3 STPGR repeats span residues 122–148, 202–227, and 238–263; these read PGPG…LGSR, PGPG…ILGR, and PGPG…MGIR. The interval 181–277 is disordered; that stretch reads PSYTVVGRTP…ASTMVGDTKC (97 aa).

It belongs to the CIMAP family.

The sequence is that of Protein CIMAP1D (Cimap1d) from Mus musculus (Mouse).